The sequence spans 1253 residues: Pleckstrin homology-like domain family B member 2 (1253 aa).

A compositionally biased stretch (basic and acidic residues) spans 1–12; it reads MEEHSYIQKELD. Disordered stretches follow at residues 1 to 43, 60 to 159, and 187 to 212; these read MEEH…PKKY, LTLS…KSHD, and DAGP…RKMS. Residues 29–43 are compositionally biased toward polar residues; sequence NDSQNMMESLSPKKY. 2 positions are modified to phosphoserine: serine 71 and serine 73. A compositionally biased stretch (polar residues) spans 74–96; that stretch reads PLGTSVRSSPSLAKIQGSKQFSY. Residues 126–144 show a composition bias toward basic and acidic residues; that stretch reads ADFDHYTGRDSERALRLSE. Residues serine 157, serine 204, serine 212, serine 242, and serine 245 each carry the phosphoserine modification. Positions 265-286 are disordered; sequence NQLTPLSLPPRNSLGNSKRTKL. Phosphoserine is present on residues serine 330, serine 334, serine 348, serine 351, serine 384, serine 387, serine 415, serine 420, serine 468, serine 489, and serine 501. Residue threonine 504 is modified to Phosphothreonine. Serine 513 carries the phosphoserine modification. The tract at residues 525 to 567 is disordered; sequence LSQSSASFFTPRSTRNDELLSDLTRTPPPPSSTFPKASSESSY. Threonine 550 and threonine 574 each carry phosphothreonine. Coiled coils occupy residues 584-696 and 722-807; these read SQEL…LDNC and FEDL…LCNL. Threonine 898 bears the Phosphothreonine mark. Positions 1032 to 1098 form a coiled coil; sequence IARIEEMERL…QKLIEKEVKI (67 aa). The PH domain occupies 1143 to 1246; that stretch reads EKTCRGFLIK…WMDVIVTGAE (104 aa).

Interacts with FLNC. Interacts with AMOTL2; interaction may facilitate PHLDB2 localization to the myotube podosome cortex that surrounds the core. Part of a cortical microtubule stabilization complex (CMSC) composed of KANK1, PPFIA1, PPFIBP1, ERC1/ELKS, PHLDB2/LL5beta, CLASPs, KIF21A and possibly additional interactors; within CMSCs KANK1 and PHLDB2/LL5beta appear to be the core components for targeting of microtubule-binding proteins KIF21A and CLASPs, whereas PPFIA1, PPFIBP1 and ERC1/ELKS serve as scaffolds for protein clustering.

The protein localises to the cytoplasm. It localises to the cell cortex. Its subcellular location is the membrane. It is found in the cell projection. The protein resides in the podosome. Functionally, seems to be involved in the assembly of the postsynaptic apparatus. May play a role in acetyl-choline receptor (AChR) aggregation in the postsynaptic membrane. This is Pleckstrin homology-like domain family B member 2 (PHLDB2) from Homo sapiens (Human).